Reading from the N-terminus, the 523-residue chain is Glutamate--cysteine ligase (523 aa).

It belongs to the glutamate--cysteine ligase type 1 family. Type 1 subfamily.

The enzyme catalyses L-cysteine + L-glutamate + ATP = gamma-L-glutamyl-L-cysteine + ADP + phosphate + H(+). The protein operates within sulfur metabolism; glutathione biosynthesis; glutathione from L-cysteine and L-glutamate: step 1/2. The protein is Glutamate--cysteine ligase of Shewanella oneidensis (strain ATCC 700550 / JCM 31522 / CIP 106686 / LMG 19005 / NCIMB 14063 / MR-1).